The sequence spans 258 residues: MVLIRVLANLVILQLSYAQKSSELVIGGDECNINEHRFLVALYDSTTRNFLCGGVLIHPEWVITAKHCNKKSMVLYLGKHKQSVKFDDEQERFPKEKHFIRCNKPRTRWGEDIMLIRLNKPVNNSEHIAPLSLPSNPPIVGSVCRVMGWGSINKYIDVLPDEPRCANINLYNYTVCRGVFPRIPKKSKILCAGDLQGRLDSCHCDSGGPLICSEEFHGIVYRGPNPCAQPDKPALYTNIFDHLHWILSIMAGNATCYP.

The first 18 residues, Met-1 to Ala-18, serve as a signal peptide directing secretion. Residues Gln-19–Leu-24 constitute a propeptide that is removed on maturation. The Peptidase S1 domain occupies Val-25–Ala-251. 6 disulfides stabilise this stretch: Cys-31–Cys-165, Cys-52–Cys-68, Cys-102–Cys-256, Cys-144–Cys-212, Cys-176–Cys-191, and Cys-202–Cys-227. Residues His-67 and Asp-112 each act as charge relay system in the active site. 2 N-linked (GlcNAc...) asparagine glycosylation sites follow: Asn-123 and Asn-172. The active-site Charge relay system is Ser-206. Residue Asn-253 is glycosylated (N-linked (GlcNAc...) asparagine).

Belongs to the peptidase S1 family. Snake venom subfamily. In terms of assembly, monomer. As to expression, expressed by the venom gland.

The protein resides in the secreted. It catalyses the reaction Selective cleavage of Arg-|-Xaa bond in fibrinogen, to form fibrin, and release fibrinopeptide A. The specificity of further degradation of fibrinogen varies with species origin of the enzyme.. Its function is as follows. Thrombin-like snake venom serine protease. Cleaves fibrinogen (FGA) to split of fibrinopeptides AM, AO, and AY; the aberrant fibrinogen is then incapable of being cross-linked, forming easily dispersible clots. The chain is Thrombin-like enzyme ancrod-2 from Calloselasma rhodostoma (Malayan pit viper).